Reading from the N-terminus, the 335-residue chain is Lipoyl synthase (335 aa).

7 residues coordinate [4Fe-4S] cluster: Cys55, Cys60, Cys66, Cys81, Cys85, Cys88, and Ser292. Positions 67-281 constitute a Radical SAM core domain; that stretch reads WEDREATFLI…SQRAEEIGFQ (215 aa).

The protein belongs to the radical SAM superfamily. Lipoyl synthase family. It depends on [4Fe-4S] cluster as a cofactor.

The protein resides in the cytoplasm. The catalysed reaction is [[Fe-S] cluster scaffold protein carrying a second [4Fe-4S](2+) cluster] + N(6)-octanoyl-L-lysyl-[protein] + 2 oxidized [2Fe-2S]-[ferredoxin] + 2 S-adenosyl-L-methionine + 4 H(+) = [[Fe-S] cluster scaffold protein] + N(6)-[(R)-dihydrolipoyl]-L-lysyl-[protein] + 4 Fe(3+) + 2 hydrogen sulfide + 2 5'-deoxyadenosine + 2 L-methionine + 2 reduced [2Fe-2S]-[ferredoxin]. Its pathway is protein modification; protein lipoylation via endogenous pathway; protein N(6)-(lipoyl)lysine from octanoyl-[acyl-carrier-protein]: step 2/2. Catalyzes the radical-mediated insertion of two sulfur atoms into the C-6 and C-8 positions of the octanoyl moiety bound to the lipoyl domains of lipoate-dependent enzymes, thereby converting the octanoylated domains into lipoylated derivatives. The sequence is that of Lipoyl synthase from Micrococcus luteus (strain ATCC 4698 / DSM 20030 / JCM 1464 / CCM 169 / CCUG 5858 / IAM 1056 / NBRC 3333 / NCIMB 9278 / NCTC 2665 / VKM Ac-2230) (Micrococcus lysodeikticus).